We begin with the raw amino-acid sequence, 235 residues long: Small ribosomal subunit protein uS2c (235 aa).

Belongs to the universal ribosomal protein uS2 family.

The protein resides in the plastid. This Euglena longa (Euglenophycean alga) protein is Small ribosomal subunit protein uS2c (rps2).